The chain runs to 122 residues: Large ribosomal subunit protein uL14 (122 aa).

It belongs to the universal ribosomal protein uL14 family. As to quaternary structure, part of the 50S ribosomal subunit. Forms a cluster with proteins L3 and L19. In the 70S ribosome, L14 and L19 interact and together make contacts with the 16S rRNA in bridges B5 and B8.

Functionally, binds to 23S rRNA. Forms part of two intersubunit bridges in the 70S ribosome. The chain is Large ribosomal subunit protein uL14 from Rhodopseudomonas palustris (strain HaA2).